The following is a 307-amino-acid chain: MmsAB operon regulatory protein (307 aa).

Positions 201-299 constitute an HTH araC/xylS-type domain; that stretch reads DGLHAYMREH…GLSPSAYRQR (99 aa). 2 consecutive DNA-binding regions (H-T-H motif) follow at residues 218-239 and 266-289; these read ERLA…KAIT and VARV…SKVM.

In terms of biological role, regulatory protein for the mmsAB operon. Activates the transcription of the mmsAB genes. The polypeptide is MmsAB operon regulatory protein (Pseudomonas aeruginosa (strain ATCC 15692 / DSM 22644 / CIP 104116 / JCM 14847 / LMG 12228 / 1C / PRS 101 / PAO1)).